Here is a 353-residue protein sequence, read N- to C-terminus: DNA integrity scanning protein DisA (353 aa).

The 139-residue stretch at 6–144 (DKELMNILKI…GGIKYVLRDS (139 aa)) folds into the DAC domain. ATP contacts are provided by residues Gly73, Leu91, and 104–108 (TRHRT).

It belongs to the DisA family. Homooctamer. Requires Mg(2+) as cofactor.

It catalyses the reaction 2 ATP = 3',3'-c-di-AMP + 2 diphosphate. In terms of biological role, participates in a DNA-damage check-point that is active prior to asymmetric division when DNA is damaged. DisA forms globular foci that rapidly scan along the chromosomes during sporulation, searching for lesions. When a lesion is present, DisA pauses at the lesion site. This triggers a cellular response that culminates in a temporary block in sporulation initiation. Also has diadenylate cyclase activity, catalyzing the condensation of 2 ATP molecules into cyclic di-AMP (c-di-AMP). c-di-AMP acts as a signaling molecule that couples DNA integrity with progression of sporulation. The rise in c-di-AMP level generated by DisA while scanning the chromosome, operates as a positive signal that advances sporulation; upon encountering a lesion, the DisA focus arrests at the damaged site and halts c-di-AMP synthesis. The sequence is that of DNA integrity scanning protein DisA from Clostridium botulinum (strain Kyoto / Type A2).